The primary structure comprises 254 residues: MNVLVAKTANDAERIAYTLIKERISGKHDFVLGLATGSTPVGMYQMFKQDALDCSHVTSVNLDEYIGLSPEHPQSYNRFMKDRLFDEVPFKQSHLPQGDAPDPQAEAARYEDLVRKLGVDLQLLGIGENGHIAFNEPGTALDAKTHVTELTESTREANRRFFDRLEDVPTHAITMGLDTIMNAREIVLVATGERKAEAVQHMIESVPTVDWPATILQAHPGVTVVLDGAAASRCAESLQARGQEAATRFFTIRD.

Asp63 (proton acceptor; for enolization step) is an active-site residue. Asn129 serves as the catalytic For ring-opening step. His131 acts as the Proton acceptor; for ring-opening step in catalysis. Glu136 serves as the catalytic For ring-opening step.

Belongs to the glucosamine/galactosamine-6-phosphate isomerase family. NagB subfamily.

The enzyme catalyses alpha-D-glucosamine 6-phosphate + H2O = beta-D-fructose 6-phosphate + NH4(+). It participates in amino-sugar metabolism; N-acetylneuraminate degradation; D-fructose 6-phosphate from N-acetylneuraminate: step 5/5. Catalyzes the reversible isomerization-deamination of glucosamine 6-phosphate (GlcN6P) to form fructose 6-phosphate (Fru6P) and ammonium ion. The protein is Glucosamine-6-phosphate deaminase of Exiguobacterium sp. (strain ATCC BAA-1283 / AT1b).